We begin with the raw amino-acid sequence, 314 residues long: 1,4-dihydroxy-2-naphthoyl-CoA synthase (314 aa).

Residues Arg58, 103–107, Tyr115, 157–161, Thr184, Ser190, Tyr287, and Lys302 contribute to the substrate site; these read SGGDQ and WAAGG.

It belongs to the enoyl-CoA hydratase/isomerase family. MenB subfamily.

The enzyme catalyses 2-succinylbenzoyl-CoA + H(+) = 1,4-dihydroxy-2-naphthoyl-CoA + H2O. Its pathway is quinol/quinone metabolism; 1,4-dihydroxy-2-naphthoate biosynthesis; 1,4-dihydroxy-2-naphthoate from chorismate: step 6/7. It participates in quinol/quinone metabolism; menaquinone biosynthesis. In terms of biological role, converts o-succinylbenzoyl-CoA (OSB-CoA) to 1,4-dihydroxy-2-naphthoyl-CoA (DHNA-CoA). This is 1,4-dihydroxy-2-naphthoyl-CoA synthase from Mycobacterium tuberculosis (strain CDC 1551 / Oshkosh).